The chain runs to 51 residues: Small ribosomal subunit protein uS13 (51 aa).

This sequence belongs to the universal ribosomal protein uS13 family. In terms of assembly, part of the 30S ribosomal subunit. Forms a loose heterodimer with protein S19. Forms two bridges to the 50S subunit in the 70S ribosome.

Functionally, located at the top of the head of the 30S subunit, it contacts several helices of the 16S rRNA. In the 70S ribosome it contacts the 23S rRNA (bridge B1a) and protein L5 of the 50S subunit (bridge B1b), connecting the 2 subunits; these bridges are implicated in subunit movement. Contacts the tRNAs in the A and P-sites. This Lactococcus lactis subsp. cremoris (Streptococcus cremoris) protein is Small ribosomal subunit protein uS13 (rpsM).